We begin with the raw amino-acid sequence, 374 residues long: UDP-N-acetylglucosamine--N-acetylmuramyl-(pentapeptide) pyrophosphoryl-undecaprenol N-acetylglucosamine transferase (374 aa).

Residues 14–16 (TGG), asparagine 125, arginine 168, serine 196, and glutamine 297 each bind UDP-N-acetyl-alpha-D-glucosamine.

The protein belongs to the glycosyltransferase 28 family. MurG subfamily.

It localises to the cell inner membrane. It carries out the reaction di-trans,octa-cis-undecaprenyl diphospho-N-acetyl-alpha-D-muramoyl-L-alanyl-D-glutamyl-meso-2,6-diaminopimeloyl-D-alanyl-D-alanine + UDP-N-acetyl-alpha-D-glucosamine = di-trans,octa-cis-undecaprenyl diphospho-[N-acetyl-alpha-D-glucosaminyl-(1-&gt;4)]-N-acetyl-alpha-D-muramoyl-L-alanyl-D-glutamyl-meso-2,6-diaminopimeloyl-D-alanyl-D-alanine + UDP + H(+). Its pathway is cell wall biogenesis; peptidoglycan biosynthesis. Functionally, cell wall formation. Catalyzes the transfer of a GlcNAc subunit on undecaprenyl-pyrophosphoryl-MurNAc-pentapeptide (lipid intermediate I) to form undecaprenyl-pyrophosphoryl-MurNAc-(pentapeptide)GlcNAc (lipid intermediate II). In Rhodopseudomonas palustris (strain BisA53), this protein is UDP-N-acetylglucosamine--N-acetylmuramyl-(pentapeptide) pyrophosphoryl-undecaprenol N-acetylglucosamine transferase.